The sequence spans 570 residues: Proline--tRNA ligase (570 aa).

It belongs to the class-II aminoacyl-tRNA synthetase family. ProS type 1 subfamily. As to quaternary structure, homodimer.

It localises to the cytoplasm. It catalyses the reaction tRNA(Pro) + L-proline + ATP = L-prolyl-tRNA(Pro) + AMP + diphosphate. Functionally, catalyzes the attachment of proline to tRNA(Pro) in a two-step reaction: proline is first activated by ATP to form Pro-AMP and then transferred to the acceptor end of tRNA(Pro). As ProRS can inadvertently accommodate and process non-cognate amino acids such as alanine and cysteine, to avoid such errors it has two additional distinct editing activities against alanine. One activity is designated as 'pretransfer' editing and involves the tRNA(Pro)-independent hydrolysis of activated Ala-AMP. The other activity is designated 'posttransfer' editing and involves deacylation of mischarged Ala-tRNA(Pro). The misacylated Cys-tRNA(Pro) is not edited by ProRS. This chain is Proline--tRNA ligase, found in Pelotomaculum thermopropionicum (strain DSM 13744 / JCM 10971 / SI).